The primary structure comprises 203 residues: Ponticulin-like protein H (203 aa).

An N-terminal signal peptide occupies residues 1–20; that stretch reads MKLLNSLVLLAALCAITANG. Asn58 is a glycosylation site (N-linked (GlcNAc...) asparagine). The segment covering 127–168 has biased composition (low complexity); the sequence is SDSTNPTSTPSTTPSATPTVTPSTTPTVTPTVTPSTTPTVAP. Residues 127–183 are disordered; sequence SDSTNPTSTPSTTPSATPTVTPSTTPTVTPTVTPSTTPTVAPTVPPTTPPSTTTGSG. Ser182 carries the GPI-like-anchor amidated serine lipid modification. Positions 183–203 are cleaved as a propeptide — removed in mature form; that stretch reads GSTVVASFGLIVSILLASLAL.

It belongs to the ponticulin family. In terms of processing, the GPI-like-anchor contains a phosphoceramide group, rather than a phosphatidyl group.

Its subcellular location is the cell membrane. Its function is as follows. Binds F-actin and nucleates actin assembly. The sequence is that of Ponticulin-like protein H (ponH) from Dictyostelium discoideum (Social amoeba).